Reading from the N-terminus, the 241-residue chain is tRNA pseudouridine synthase B (241 aa).

The Nucleophile role is filled by D45.

Belongs to the pseudouridine synthase TruB family. Type 1 subfamily.

The enzyme catalyses uridine(55) in tRNA = pseudouridine(55) in tRNA. In terms of biological role, responsible for synthesis of pseudouridine from uracil-55 in the psi GC loop of transfer RNAs. This Chlamydia trachomatis serovar L2 (strain ATCC VR-902B / DSM 19102 / 434/Bu) protein is tRNA pseudouridine synthase B.